The primary structure comprises 169 residues: 3-hydroxyacyl-[acyl-carrier-protein] dehydratase FabZ (169 aa).

His66 is an active-site residue.

This sequence belongs to the thioester dehydratase family. FabZ subfamily.

It is found in the cytoplasm. The enzyme catalyses a (3R)-hydroxyacyl-[ACP] = a (2E)-enoyl-[ACP] + H2O. Its function is as follows. Involved in unsaturated fatty acids biosynthesis. Catalyzes the dehydration of short chain beta-hydroxyacyl-ACPs and long chain saturated and unsaturated beta-hydroxyacyl-ACPs. The protein is 3-hydroxyacyl-[acyl-carrier-protein] dehydratase FabZ of Helicobacter hepaticus (strain ATCC 51449 / 3B1).